Reading from the N-terminus, the 327-residue chain is Flotillin-like protein FloA (327 aa).

2 consecutive transmembrane segments (helical) span residues 8 to 28 and 29 to 49; these read VLLI…LVPI and PLWI…LVGM.

This sequence belongs to the flotillin-like FloA family. In terms of assembly, homooligomerizes.

It localises to the cell membrane. The protein localises to the membrane raft. Functionally, found in functional membrane microdomains (FMM) that may be equivalent to eukaryotic membrane rafts. FMMs are highly dynamic and increase in number as cells age. Flotillins are thought to be important factors in membrane fluidity. The polypeptide is Flotillin-like protein FloA (Exiguobacterium sibiricum (strain DSM 17290 / CCUG 55495 / CIP 109462 / JCM 13490 / 255-15)).